The sequence spans 509 residues: Cytochrome P450 monooxygenase traB (509 aa).

Residues 8-28 (LVELVSITGGLIVLFIAYTGF) form a helical membrane-spanning segment. Cys453 contacts heme.

It belongs to the cytochrome P450 family. It depends on heme as a cofactor.

It is found in the membrane. It functions in the pathway secondary metabolite biosynthesis. Functionally, cytochrome P450 monooxygenase; part of the tra gene cluster that produces terrestric acid. The clavatol biosynthesis cluster cla and the terrestric acid cluster tra are both involved in the production of peniphenones and penilactones. The non-reducing PKS claF is responsible for the formation of clavatol from successive condensations of 3 malonyl-CoA units, presumably with a simple acetyl-CoA starter unit, and 2 methylation steps. The esterase claE probably collaborates with claF by catalyzing the hydrolysis of ACP-bound acyl intermediates to free the ACP from stalled intermediates. The clavatol oxidase claD then converts clavatol to hydroxyclavatol. Spontaneous dehydration of hydroxyclavatol leads to the accumulation of the highly active ortho-quinone methide. On the other hand, the PKS-NRPS hybrid traA is involved in the formation of crustosic acid, with the help of traB and traD. The polyketide synthase module (PKS) of traA is responsible for the synthesis of the polyketide backbone via the condensation of an acetyl-CoA starter unit with 3 malonyl-CoA units. The downstream nonribosomal peptide synthetase (NRPS) module then amidates the carboxyl end of the polyketide with L-malic acid. Because traA lacks a designated enoylreductase (ER) domain, the required activity is provided the enoyl reductase traG. Crustosic acid undergoes decarboxylation and isomerization to the terrestric acid, catalyzed by the 2-oxoglutarate-dependent dioxygenase traH. Both acids are further converted to the 2 gamma-butyrolactones (R)-5-methyltetronic acid and (S)-5-carboxylmethyltetronic acid, with involvement of the cytochrome P450 monooxygenase claJ. Spontaneous addition of the methide to these gamma-butyrolactones leads to peniphenone D and penilactone D, which undergo again stereospecific attacking by methide to give penilactones A and B. This chain is Cytochrome P450 monooxygenase traB, found in Penicillium crustosum (Blue mold fungus).